The primary structure comprises 68 residues: Large ribosomal subunit protein bL31 (68 aa).

Residues Cys17, Cys19, Cys37, and Cys40 each coordinate Zn(2+).

This sequence belongs to the bacterial ribosomal protein bL31 family. Type A subfamily. As to quaternary structure, part of the 50S ribosomal subunit. Zn(2+) is required as a cofactor.

Binds the 23S rRNA. The sequence is that of Large ribosomal subunit protein bL31 from Clostridium perfringens (strain ATCC 13124 / DSM 756 / JCM 1290 / NCIMB 6125 / NCTC 8237 / Type A).